Consider the following 160-residue polypeptide: Cyclic pyranopterin monophosphate synthase (160 aa).

Substrate-binding positions include leucine 74 to histidine 76 and methionine 112 to glutamate 113. Aspartate 127 is an active-site residue.

This sequence belongs to the MoaC family. As to quaternary structure, homohexamer; trimer of dimers.

The catalysed reaction is (8S)-3',8-cyclo-7,8-dihydroguanosine 5'-triphosphate = cyclic pyranopterin phosphate + diphosphate. It functions in the pathway cofactor biosynthesis; molybdopterin biosynthesis. Its function is as follows. Catalyzes the conversion of (8S)-3',8-cyclo-7,8-dihydroguanosine 5'-triphosphate to cyclic pyranopterin monophosphate (cPMP). In Trichlorobacter lovleyi (strain ATCC BAA-1151 / DSM 17278 / SZ) (Geobacter lovleyi), this protein is Cyclic pyranopterin monophosphate synthase.